A 312-amino-acid polypeptide reads, in one-letter code: tRNA uridine(34) hydroxylase (312 aa).

The 96-residue stretch at 130-225 (RGDEVVFFDG…YGEQFGNKGL (96 aa)) folds into the Rhodanese domain. The Cysteine persulfide intermediate role is filled by Cys-185.

This sequence belongs to the TrhO family.

It carries out the reaction uridine(34) in tRNA + AH2 + O2 = 5-hydroxyuridine(34) in tRNA + A + H2O. Functionally, catalyzes oxygen-dependent 5-hydroxyuridine (ho5U) modification at position 34 in tRNAs. The polypeptide is tRNA uridine(34) hydroxylase (Corynebacterium glutamicum (strain ATCC 13032 / DSM 20300 / JCM 1318 / BCRC 11384 / CCUG 27702 / LMG 3730 / NBRC 12168 / NCIMB 10025 / NRRL B-2784 / 534)).